A 205-amino-acid polypeptide reads, in one-letter code: Pyrrolidone-carboxylate peptidase (205 aa).

Catalysis depends on residues Glu-78, Cys-141, and His-165.

The protein belongs to the peptidase C15 family. As to quaternary structure, homotetramer.

Its subcellular location is the cytoplasm. It catalyses the reaction Release of an N-terminal pyroglutamyl group from a polypeptide, the second amino acid generally not being Pro.. Removes 5-oxoproline from various penultimate amino acid residues except L-proline. The protein is Pyrrolidone-carboxylate peptidase of Thermosipho africanus (strain TCF52B).